Reading from the N-terminus, the 139-residue chain is MKKVRIGAVVAEFNYDITHMMLELAKEHARFLDAEITRVIAVPGVFDMPLAVKKLLLEDEIDAVITLGAVIEGATDHDQIVVQHASRKIADLALDYDKPVALGISGPGMTRLEAHQRVDYAKRAVEAAVKMYRRLKEDI.

5-amino-6-(D-ribitylamino)uracil contacts are provided by residues Phe-13, 45–47 (VFD), and 69–71 (AVI). Residue 74–75 (AT) coordinates (2S)-2-hydroxy-3-oxobutyl phosphate. The active-site Proton donor is His-77. Residue Leu-102 coordinates 5-amino-6-(D-ribitylamino)uracil. Arg-117 contacts (2S)-2-hydroxy-3-oxobutyl phosphate.

The protein belongs to the DMRL synthase family.

The catalysed reaction is (2S)-2-hydroxy-3-oxobutyl phosphate + 5-amino-6-(D-ribitylamino)uracil = 6,7-dimethyl-8-(1-D-ribityl)lumazine + phosphate + 2 H2O + H(+). Its pathway is cofactor biosynthesis; riboflavin biosynthesis; riboflavin from 2-hydroxy-3-oxobutyl phosphate and 5-amino-6-(D-ribitylamino)uracil: step 1/2. In terms of biological role, catalyzes the formation of 6,7-dimethyl-8-ribityllumazine by condensation of 5-amino-6-(D-ribitylamino)uracil with 3,4-dihydroxy-2-butanone 4-phosphate. This is the penultimate step in the biosynthesis of riboflavin. In Methanothermobacter thermautotrophicus (strain ATCC 29096 / DSM 1053 / JCM 10044 / NBRC 100330 / Delta H) (Methanobacterium thermoautotrophicum), this protein is 6,7-dimethyl-8-ribityllumazine synthase.